Consider the following 114-residue polypeptide: uncharacterized protein (114 aa).

Disordered stretches follow at residues 26–45 (GMKQ…DALG) and 72–98 (PKGS…SVQA).

This is an uncharacterized protein from Homo sapiens (Human).